The primary structure comprises 316 residues: MAMSSLKSRVTLLLNWYTNPYHTPILVAQQLGFYSEEDIKLAILEPADPSDVTEIVGLGTVDFGVKAMIHTVAAKAKGYPVTSIGTLLDEPPTGLIALKSSGINSFQDIVGKRVGYIGEFGKKIIDDLASLAGIDPTSYKTVRIGMNVTDAIYRDVIDTGIGFINFQKVELEHLCGETVFLRIDQLAGLGCCCFCSIQFIVPEITLQQPELVKGFLRATQRGAAYTTEKPEEAYELLCQAKPQLRTPLYQKIFTRTLPFFSRTLINVDRDWDKVGRYTKHLKIIDEHFDISQCYTNRFLPDTPYSDLKPIACCLEN.

K66 is modified (N6-(pyridoxal phosphate)lysine). H70 is a catalytic residue. Position 118–121 (118–121 (GEFG)) interacts with pyridoxal 5'-phosphate. The CCCFC; essential for catalytic activity, may be the site of iron coordination signature appears at 191 to 195 (CCCFC).

Belongs to the NMT1/THI5 family. Homodimer. Requires Fe cation as cofactor.

It catalyses the reaction N(6)-(pyridoxal phosphate)-L-lysyl-[4-amino-5-hydroxymethyl-2-methylpyrimidine phosphate synthase] + L-histidyl-[4-amino-5-hydroxymethyl-2-methylpyrimidine phosphate synthase] + 2 Fe(3+) + 4 H2O = L-lysyl-[4-amino-5-hydroxymethyl-2-methylpyrimidine phosphate synthase] + (2S)-2-amino-5-hydroxy-4-oxopentanoyl-[4-amino-5-hydroxymethyl-2-methylpyrimidine phosphate synthase] + 4-amino-2-methyl-5-(phosphooxymethyl)pyrimidine + 3-oxopropanoate + 2 Fe(2+) + 2 H(+). The protein operates within cofactor biosynthesis; thiamine diphosphate biosynthesis. Its function is as follows. Responsible for the formation of the pyrimidine heterocycle in the thiamine biosynthesis pathway. Catalyzes the formation of hydroxymethylpyrimidine phosphate (HMP-P) from histidine and pyridoxal phosphate (PLP). The protein uses PLP and the active site histidine to form HMP-P, generating an inactive enzyme. The enzyme can only undergo a single turnover, which suggests it is a suicide enzyme. In Legionella pneumophila subsp. pneumophila (strain Philadelphia 1 / ATCC 33152 / DSM 7513), this protein is 4-amino-5-hydroxymethyl-2-methylpyrimidine phosphate synthase.